A 660-amino-acid chain; its full sequence is UvrABC system protein B (660 aa).

In terms of domain architecture, Helicase ATP-binding spans 24 to 177 (KGFKEGNQFE…DDLARALIDL (154 aa)). 37 to 44 (GVTGSGKT) lines the ATP pocket. The Beta-hairpin signature appears at 90–113 (YYDYYQPEAYVPQSDTYIAKDSSV). The Helicase C-terminal domain maps to 428 to 594 (QIDDLVSEVN…TIQKSVRDLI (167 aa)). The region spanning 620–655 (EKHIADIEKKMKKAAAELNFEAAAEYRDKLIMLKNT) is the UVR domain.

Belongs to the UvrB family. As to quaternary structure, forms a heterotetramer with UvrA during the search for lesions. Interacts with UvrC in an incision complex.

The protein localises to the cytoplasm. In terms of biological role, the UvrABC repair system catalyzes the recognition and processing of DNA lesions. A damage recognition complex composed of 2 UvrA and 2 UvrB subunits scans DNA for abnormalities. Upon binding of the UvrA(2)B(2) complex to a putative damaged site, the DNA wraps around one UvrB monomer. DNA wrap is dependent on ATP binding by UvrB and probably causes local melting of the DNA helix, facilitating insertion of UvrB beta-hairpin between the DNA strands. Then UvrB probes one DNA strand for the presence of a lesion. If a lesion is found the UvrA subunits dissociate and the UvrB-DNA preincision complex is formed. This complex is subsequently bound by UvrC and the second UvrB is released. If no lesion is found, the DNA wraps around the other UvrB subunit that will check the other stand for damage. This is UvrABC system protein B from Agathobacter rectalis (strain ATCC 33656 / DSM 3377 / JCM 17463 / KCTC 5835 / VPI 0990) (Eubacterium rectale).